The chain runs to 487 residues: MSDDKPFLCTAPGCGQRFTNEDHLAVHKHKHEMTLKFGPARNDSVIVADQTPTPTRFLKNCEEVGLFNELASPFENEFKKASEDDIKKMPLDLSPLATPIIRNKIEEPSVVETTHQDSPLPHPESTTNDEKEVSLQQTAQPTSTIVRPASLQVPNVLLTSSDSSVIIQQAIPSPTSSTVITQAPSSNRPIVPVPGPFPLLLHLPNGQTMPVAIPASITNSNVHVPAAVPLVRPVTMVPSIPGIPGPSSPQPVQSEAKLRLKAALTQQHPQVTNGDTAKGHPSGLVRTQSEEPRPQSLQQPATSTTETPASPAQPTQQTPNTGGRRRRAANEDPDEKRRKFLERNRAAASRCRQKRKVWVQSLEKKAEDLSSLNGQLQNEVTLLRNEVAQLKQLLLAHKDCPVTAMQKKSGYHTADKDDSSEDISVPSSPHTEAIQHSSVSTSNGVSSTSKAEAVATSVLTQLADQSSEPGLPQVGVVPPSQAQPSGS.

The C2H2-type zinc finger occupies 7-31 (FLCTAPGCGQRFTNEDHLAVHKHKH). Disordered stretches follow at residues 106–132 (EEPSVVETTHQDSPLPHPESTTNDEKE) and 267–354 (QHPQ…CRQK). Low complexity predominate over residues 298-319 (QQPATSTTETPASPAQPTQQTP). The segment covering 328–345 (AANEDPDEKRRKFLERNR) has biased composition (basic and acidic residues). Positions 334-397 (DEKRRKFLER…AQLKQLLLAH (64 aa)) constitute a bZIP domain. The segment at 336–356 (KRRKFLERNRAAASRCRQKRK) is basic motif. A leucine-zipper region spans residues 362–390 (LEKKAEDLSSLNGQLQNEVTLLRNEVAQL). The Nuclear export signal motif lies at 387–396 (VAQLKQLLLA). Positions 407-487 (KKSGYHTADK…PPSQAQPSGS (81 aa)) are disordered. A compositionally biased stretch (polar residues) spans 425 to 436 (VPSSPHTEAIQH). Low complexity predominate over residues 437-449 (SSVSTSNGVSSTS). Positions 457 to 468 (SVLTQLADQSSE) are enriched in polar residues.

This sequence belongs to the bZIP family. ATF subfamily. As to quaternary structure, binds DNA as a dimer and can form a homodimer in the absence of DNA. Can form a heterodimer with JUN. Heterodimerization is essential for its transcriptional activity.

Its subcellular location is the nucleus. It is found in the cytoplasm. It localises to the mitochondrion outer membrane. Functionally, transcriptional activator which regulates the transcription of various genes, including those involved in anti-apoptosis, cell growth, and DNA damage response. Dependent on its binding partner, binds to CRE (cAMP response element) consensus sequences (5'-TGACGTCA-3') or to AP-1 (activator protein 1) consensus sequences (5'-TGACTCA-3'). The chain is Cyclic AMP-dependent transcription factor ATF-2 (ATF2) from Gallus gallus (Chicken).